The following is a 250-amino-acid chain: Developmental protein SEPALLATA 2 (250 aa).

The MADS-box domain occupies 3 to 57; that stretch reads RGRVELKRIENKINRQVTFAKRRNGLLKKAYELSVLCDAEVSLIVFSNRGKLYEF. A coiled-coil region spans residues 85-150; that stretch reads AKELENSYRE…CIKTQYMLDQ (66 aa). Positions 88-178 constitute a K-box domain; that stretch reads LENSYREYLK…SMKLEDMIGV (91 aa).

Heterodimer with AGAMOUS capable of binding to CArG-box sequences. Interacts with TT16/AGL32.

It localises to the nucleus. Functionally, probable transcription factor. Functions with SEPALLATA1/AGL2 and SEPALLATA3/AGL9 to ensure proper development of petals, stamens and carpels and to prevent the indeterminate growth of the flower meristem. Forms a heterodimer via the K-box domain with AG, that could be involved in genes regulation during floral meristem development. This is Developmental protein SEPALLATA 2 (SEP2) from Arabidopsis thaliana (Mouse-ear cress).